A 359-amino-acid polypeptide reads, in one-letter code: 3-dehydroshikimate dehydratase (359 aa).

It belongs to the bacterial two-domain DSD family. As to quaternary structure, monomer.

The catalysed reaction is 3-dehydroshikimate = 3,4-dihydroxybenzoate + H2O. The protein operates within aromatic compound metabolism; 3,4-dihydroxybenzoate biosynthesis; 3,4-dihydroxybenzoate from 3-dehydroquinate: step 2/2. With respect to regulation, divalent cations such as Mg(2+), but also MO(2+), Mn(2+), Ba(2+), and Co(2+) activate the enzyme, whereas monovalent cations as K(+), Na(+), and NH4(+) decrease its activity slightly. In terms of biological role, 3-dehydroshikimate dehydratase; part of the qa gene cluster that mediates the catabolism of quinic acid (QA) and as such, allows the use of QA as a sole carbon source. Catalyzes the third reaction in the inducible quinic acid catabolic pathway by converting dehydroshikimate to protocatechuate. The qa cluster encodes 3 inducible enymes (qa-2, qa-3 and qa-4) catalyzing the first three reactions in the catabolism of quinic acid to protocatechuic acid (also known as 3,4-Dihydroxybenzoic acid). This Neurospora crassa (strain ATCC 24698 / 74-OR23-1A / CBS 708.71 / DSM 1257 / FGSC 987) protein is 3-dehydroshikimate dehydratase.